A 3433-amino-acid chain; its full sequence is MSKKPGGPGKSRAVNMLKRGMPRVLSLTGLKRAMLSLIDGRGPTRFVLALLAFFRFTAIAPTRAVLDRWRSVNKQTAMKHLLSFKKELGTLTSAINRRSSKQKKRGGKTGIAFMIGLIAGVGAVTLSNFQGKVMMTVNATDVTDIITIPPAAGKNLCIVRAMDVGHMCDDTITYECPVLSAGNDPEDIDCWCTKLAVYVRYGRCTKTRHSRRSRRSLTVQTHGESTLSNKKGAWMDSTKATRYLVKTESWILRNPGYALVAAVIGWMLGSNTMQRVVFAVLLLLVAPAYSFNCLGMSNRDFLEGVSGATWVDLVLEGDSCVTIMSKDKPTIDVKMMNMEAANLAEVRSYCYLATVSELSTKAACPTMGEAHNDKRADPSFVCKQGVVDRGWGNGCGLFGKGSIDTCAKFACSTKATGRTILKENIKYEVAIFVHGPTTVESHGNYFTQTGAAQAGRFSITPAAPSYTLKLGEYGEVTVDCEPRSGIDTSAYYVMTVGTKTFLVHREWFMDLNLPWSSAESNVWRNRETLMEFEEPHATKQSVIALGSQEGALHQALAGAIPVEFSSNTVKLTSGHLKCRVKMEKLQLKGTTYGVCSKAFRFLGTPADTGHGTVVLELQYTGTDGPCKIPISSVASLNDLTPVGRLVTVNPFVSVSTANAKVLIELEPPFGDSYIVVGRGEQQINHHWHKSGSSIGKAFTATLKGAQRLAALGDTAWDFGSVGGVFTSVGKAVHQVFGGAFRSLFGGMSWITQGLLGALLLWMGINARDRSIALTFLAVGGVLLFLSVNVHADTGCAIDISRQELRCGSGVFIHNDVEAWIDRYKYYPETPQGLAKIIQKAHKEGVCGLRSVSRLEHQMWEAVKDELNTLLKENGVDLSIVVEKQEGMYKSAPRRLTATTEKLEIGWKAWGKSILFAPELANNTFVIDGPETKECPTQNRAWNNLEVEDFGFGLTSTRMFLRVRESNTTECDSKIIGTAVKNNLAIHSDLSYWIESRFNDTWKLERAVLGEVKSCTWPETHTLWGDGVLESDLIIPITLAGPRSNHNRRPGYKTQSQGPWDEGRVEIDFDYCPGTTVTLSESCGHRGPATRTTTESGKLITDWCCRSCTLPPLRYQTDNGCWYGMEIRPQRHDEKTLVQSQVNAYNADMIDPFQLGLLVVFLATQEVLRKRWTAKISMPAILIALLVLVFGGITYTDVLRYVILVGAAFAESNSGGDVVHLALMATFKIQPVFMVASFLKARWTNQENILLMLAAAFFQMAYYDARQILLWEMPDVLNSLAVAWMILRAITFTTTSNVVVPLLALLTPGLRCLNLDVYRILLLMVGIGSLIREKRSAAAKKKGASLLCLALASTGFFNPMILAAGLVACDPNRKRGWPATEVMTAVGLMFAIVGGLAELDIDSMAIPMTIAGLMFAAFVISGKSTDMWIERTADISWEGDAEITGSSERVDVRLDDDGNFQLMNDPGAPWKIWMLRMACLAISAYTPWAILPSVVGFWITLQYTKRGGVLWDTPSPKEYKRGDTTTGVYRIMTRGLLGSYQAGAGVMVEGVFHTLWHTTKGAALMSGEGRLDPYWGSVKEDRLCYGGPWKLQHKWNGQDEVQMIVVEPGKNVKNVQTKPGVFKTPEGEIGAVTLDFPTGTSGSPIVDKNGDVIGLYGNGVIMPNGSYISAIVQGERMDEPVPAGFEPEMLRKKQITVLDLHPGAGKTRRILPQIIKEAINRRLRTAVLAPTRVVAAEMAEALRGLPIRYQTSAVAREHNGNEIVDVMCHATLTHRLMSPHRVPNYNLFVMDEAHFTDPASIAARGYISTRVELGEAAAIFMTATPPGTSDPFPESNAPISDLQTEIPDRAWNSGYEWITEYIGKTVWFVPSVKMGNEIALCLQRAGKKVIQLNRKSYETEYPKCKNDDWDFVVTTDISEMGANFKASRVIDSRKSVKPTIITEGEGRVILGEPSAVTAASAAQRRGRTGRNPSQAGDEYCYGGHTNEDDSNCAHWTEARIMLDNINMPNGLIAQFYQPEREKVYTMDGEYRLRGEERKNFLELLRTADLPVWLAYKVAAAGVSYHDRRWCFDGPRTNTILEDNNEVEVITKLGERKILRPRWIDARVYSDHQALKSFKDFASGKRSQIGFIEVLGKMPEHFMGKTWEALDTMYVVATAEKGGRAHRMALEELPDALQTIALIALLSVMTMGVFFLLMQRKGIGKIGLGGVVLGAATFFCWMAEVPGTKIAGMLLLSLLLMIVLIPEPEKQRSQTDNQLAVFLICVLTLVGAVAANEMGWLDKTKSDISGLFGQRIETKENFSIGEFLLDLRPATAWSLYAVTTAVLTPLLKHLITSDYITTSLTSINVQASALFTLARGFPFVDVGVSALLLAAGCWGQVTLTVTVTSATLLFCHYAYMVPGWQAEAMRSAQRRTAAGIMKNAVVDGIVATDVPELERTTPIMQKKVGQVMLILVSLAALVVNPSVKTVREAGILITAAAVTLWENGASSVWNATTAIGLCHIMRGGWLSCLSITWTLVKNMEKPGLKRGGAKGRTLGEVWKERLNQMTKEEFIRYRKEAITEVDRSAAKHARKERNITGGHPVSRGTAKLRWLVERRFLEPVGKVIDLGCGRGGWCYYMATQKRVQEVRGYTKGGPGHEEPQLVQSYGWNIVTMKSGVDVFYRPSECCDTLLCDIGESSSSAEVEEHRTLRVLEMVEDWLHRGPKEFCVKVLCPYMPKVIEKMELLQRRYGGGLVRNPLSRNSTHEMYWVSRASGNVVHSVNMTSQVLLGRMEKKTWKGPQYEEDVNLGSGTRAVGKPLLNSDTSKIKNRIERLRREYSSTWHHDENHPYRTWNYHGSYEVKPTGSASSLVNGVVRLLSKPWDTITNVTTMAMTDTTPFGQQRVFKEKVDTKAPEPPEGVKYVLNETTNWLWAFLAREKRPRMCSREEFIRKVNSNAALGAMFEEQNQWRSAREAVEDPKFWEMVDEEREAHLRGECHTCIYNMMGKREKKPGEFGKAKGSRAIWFMWLGARFLEFEALGFLNEDHWLGRKNSGGGVEGLGLQKLGYILREVGTRPGGRIYADDTAGWDTRITRADLENEAKVLELLDGEHRRLARAIIELTYRHKVVKVMRPAADGRTVMDVISREDQRGSGQVVTYALNTFTNLAVQLVRMMEGEGVIGPDDVEKLTKGKGPKVRTWLSENGEERLSRMAVSGDDCVVKPLDDRFATSLHFLNAMSKVRKDIQEWKPSTGWYDWQQVPFCSNHFTELIMKDGRTLVTPCRGQDELVGRARISPGAGWNVRDTACLAKSYAQMWLLLYFHRRDLRLMANAICSAVPVNWVPTGRTTWSIHAGGEWMTTEDMLEVWNRVWIEENEWMEDKTPVEKWSDVPYSGKREDIWCGSLIGTRARATWAENIQVAINQVRSIIGDEKYVDYMSSLKRYEDTTLVEDTVL.

The interaction with host EXOC1 stretch occupies residues 2–15 (SKKPGGPGKSRAVN). At 2 to 105 (SKKPGGPGKS…NRRSSKQKKR (104 aa)) the chain is on the cytoplasmic side. The hydrophobic; homodimerization of capsid protein C stretch occupies residues 37–72 (LIDGRGPTRFVLALLAFFRFTAIAPTRAVLDRWRSV). A propeptide spans 106–123 (GGKTGIAFMIGLIAGVGA) (ER anchor for the capsid protein C, removed in mature form by serine protease NS3). Residues 106 to 126 (GGKTGIAFMIGLIAGVGAVTL) form a helical membrane-spanning segment. The Extracellular segment spans residues 127-248 (SNFQGKVMMT…KATRYLVKTE (122 aa)). An N-linked (GlcNAc...) asparagine; by host glycan is attached at Asn138. Residues 249 to 269 (SWILRNPGYALVAAVIGWMLG) traverse the membrane as a helical segment. Over 270-273 (SNTM) the chain is Cytoplasmic. A helical membrane pass occupies residues 274–290 (QRVVFAVLLLLVAPAYS). Residues 291–743 (FNCLGMSNRD…QVFGGAFRSL (453 aa)) lie on the Extracellular side of the membrane. Disulfide bonds link Cys293–Cys320, Cys350–Cys406, Cys364–Cys395, and Cys382–Cys411. The interval 388–401 (DRGWGNGCGLFGKG) is fusion peptide. Residue Asn444 is glycosylated (N-linked (GlcNAc...) asparagine; by host). Cystine bridges form between Cys480-Cys578 and Cys595-Cys626. The chain crosses the membrane as a helical span at residues 744-764 (FGGMSWITQGLLGALLLWMGI). The Cytoplasmic portion of the chain corresponds to 765–770 (NARDRS). A helical membrane pass occupies residues 771-791 (IALTFLAVGGVLLFLSVNVHA). At 792–1216 (DTGCAIDISR…AFAESNSGGD (425 aa)) the chain is on the extracellular side. 2 disulfide bridges follow: Cys795–Cys806 and Cys846–Cys934. N-linked (GlcNAc...) asparagine; by host glycans are attached at residues Asn921, Asn966, and Asn998. Intrachain disulfides connect Cys970/Cys1014, Cys1071/Cys1120, Cys1082/Cys1103, and Cys1104/Cys1107. Residues 1217–1237 (VVHLALMATFKIQPVFMVASF) traverse the membrane as a helical segment. Over 1238 to 1247 (LKARWTNQEN) the chain is Cytoplasmic. The chain crosses the membrane as a helical span at residues 1248–1268 (ILLMLAAAFFQMAYYDARQIL). The Lumenal portion of the chain corresponds to 1269 to 1288 (LWEMPDVLNSLAVAWMILRA). The helical transmembrane segment at 1289 to 1309 (ITFTTTSNVVVPLLALLTPGL) threads the bilayer. Over 1310–1316 (RCLNLDV) the chain is Cytoplasmic. The chain crosses the membrane as a helical span at residues 1317 to 1335 (YRILLLMVGIGSLIREKRS). The Lumenal portion of the chain corresponds to 1336–1345 (AAAKKKGASL). Residues 1346–1366 (LCLALASTGFFNPMILAAGLV) form a helical membrane-spanning segment. Over 1367-1375 (ACDPNRKRG) the chain is Cytoplasmic. The chain crosses the membrane as a helical span at residues 1376–1396 (WPATEVMTAVGLMFAIVGGLA). At 1397–1399 (ELD) the chain is on the lumenal side. Residues 1400-1420 (IDSMAIPMTIAGLMFAAFVIS) traverse the membrane as a helical segment. The Cytoplasmic segment spans residues 1421–1477 (GKSTDMWIERTADISWEGDAEITGSSERVDVRLDDDGNFQLMNDPGAPWKIWMLRMA). The interacts with and activates NS3 protease stretch occupies residues 1428–1467 (IERTADISWEGDAEITGSSERVDVRLDDDGNFQLMNDPGA). Positions 1478 to 1498 (CLAISAYTPWAILPSVVGFWI) form an intramembrane region, helical. The Cytoplasmic segment spans residues 1499 to 2174 (TLQYTKRGGV…RMALEELPDA (676 aa)). The Peptidase S7 domain occupies 1506–1683 (GGVLWDTPSP…ERMDEPVPAG (178 aa)). Active-site charge relay system; for serine protease NS3 activity residues include His1556, Asp1580, and Ser1640. The Helicase ATP-binding domain maps to 1686–1842 (PEMLRKKQIT…ESNAPISDLQ (157 aa)). The interval 1690–1693 (RKKQ) is important for RNA-binding. 1699 to 1706 (LHPGAGKT) lines the ATP pocket. Residues 1790 to 1793 (DEAH) carry the DEAH box motif. Residues 1853-2018 (GYEWITEYIG…GLIAQFYQPE (166 aa)) enclose the Helicase C-terminal domain. Residue Lys1894 is modified to N6-acetyllysine; by host. A regulates the ATPase activity of NS3 helicase region spans residues 2169–2173 (EELPD). The helical transmembrane segment at 2175–2195 (LQTIALIALLSVMTMGVFFLL) threads the bilayer. The Lumenal segment spans residues 2196–2200 (MQRKG). Positions 2201–2221 (IGKIGLGGVVLGAATFFCWMA) form an intramembrane region, helical. A topological domain (lumenal) is located at residue Glu2222. Residues 2223–2243 (VPGTKIAGMLLLSLLLMIVLI) traverse the membrane as a helical segment. Residues 2244–2258 (PEPEKQRSQTDNQLA) lie on the Cytoplasmic side of the membrane. The chain crosses the membrane as a helical span at residues 2259-2273 (VFLICVLTLVGAVAA). Over 2274–2312 (NEMGWLDKTKSDISGLFGQRIETKENFSIGEFLLDLRPA) the chain is Lumenal. The helical intramembrane region spans 2313–2333 (TAWSLYAVTTAVLTPLLKHLI). Topologically, residues 2334–2380 (TSDYITTSLTSINVQASALFTLARGFPFVDVGVSALLLAAGCWGQVT) are lumenal. A helical transmembrane segment spans residues 2381–2401 (LTVTVTSATLLFCHYAYMVPG). Residues 2402–2444 (WQAEAMRSAQRRTAAGIMKNAVVDGIVATDVPELERTTPIMQK) are Cytoplasmic-facing. A helical transmembrane segment spans residues 2445 to 2465 (KVGQVMLILVSLAALVVNPSV). The Lumenal segment spans residues 2466-2470 (KTVRE). A helical transmembrane segment spans residues 2471–2491 (AGILITAAAVTLWENGASSVW). Residues 2492-3433 (NATTAIGLCH…DTTLVEDTVL (942 aa)) are Cytoplasmic-facing. One can recognise an mRNA cap 0-1 NS5-type MT domain in the interval 2529-2794 (GGAKGRTLGE…DVNLGSGTRA (266 aa)). Residue Ser2584 coordinates S-adenosyl-L-methionine. Ser2584 bears the Phosphoserine mark. Lys2589 serves as the catalytic For 2'-O-MTase activity. Positions 2614, 2615, 2632, 2633, 2659, and 2660 each coordinate S-adenosyl-L-methionine. Asp2674 serves as the catalytic For 2'-O-MTase activity. Residue Ile2675 participates in S-adenosyl-L-methionine binding. Active-site for 2'-O-MTase activity residues include Lys2710 and Glu2746. Residue Tyr2748 participates in S-adenosyl-L-methionine binding. The Nuclear localization signal motif lies at 2917 to 2919 (REK). Residues Glu2968, His2972, Cys2977, and Cys2980 each contribute to the Zn(2+) site. Positions 3058-3210 (GRIYADDTAG…KPLDDRFATS (153 aa)) constitute a RdRp catalytic domain. 3 residues coordinate Zn(2+): His3245, Cys3261, and Cys3380. The PDZ-binding signature appears at 3431-3433 (TVL).

This sequence in the N-terminal section; belongs to the class I-like SAM-binding methyltransferase superfamily. mRNA cap 0-1 NS5-type methyltransferase family. As to quaternary structure, homodimer; further assembles as a homotetramer. Interacts (via N-terminus) with host EXOC1 (via C-terminus); this interaction results in EXOC1 degradation through the proteasome degradation pathway. Forms heterodimers with envelope protein E in the endoplasmic reticulum and Golgi. In terms of assembly, homodimer; in the endoplasmic reticulum and Golgi. Interacts with protein prM. Interacts with non-structural protein 1. As to quaternary structure, homodimer; Homohexamer when secreted. Interacts with envelope protein E. NS1 interacts with NS4B. Interacts with host complement protein CFH; this interaction leads to the degradation of C3. Interacts (via N-terminus) with serine protease NS3. In terms of assembly, forms a heterodimer with serine protease NS3. May form homooligomers. As to quaternary structure, forms a heterodimer with NS2B. Interacts with non-structural protein 2A (via N-terminus). Interacts with NS4B. Interacts with unphosphorylated RNA-directed RNA polymerase NS5; this interaction stimulates RNA-directed RNA polymerase NS5 guanylyltransferase activity. Interacts with Serine protease/Helicase NS3. Interacts with NS1. In terms of assembly, homodimer. Interacts with host STAT2; this interaction inhibits the phosphorylation of the latter, and, when all viral proteins are present (polyprotein), targets STAT2 for degradation. Interacts with serine protease NS3. Specific enzymatic cleavages in vivo yield mature proteins. Cleavages in the lumen of endoplasmic reticulum are performed by host signal peptidase, whereas cleavages in the cytoplasmic side are performed by serine protease NS3. Signal cleavage at the 2K-4B site requires a prior NS3 protease-mediated cleavage at the 4A-2K site. Post-translationally, cleaved in post-Golgi vesicles by a host furin, releasing the mature small envelope protein M, and peptide pr. This cleavage is incomplete as up to 30% of viral particles still carry uncleaved prM. In terms of processing, N-glycosylated. N-glycosylated. The excreted form is glycosylated and this is required for efficient secretion of the protein from infected cells. Post-translationally, acetylated by host KAT5. Acetylation modulates NS3 RNA-binding and unwinding activities and plays an important positive role for viral replication. In terms of processing, phosphorylated on serines residues. This phosphorylation may trigger NS5 nuclear localization.

The protein localises to the virion. The protein resides in the host nucleus. It is found in the host cytoplasm. Its subcellular location is the host perinuclear region. It localises to the secreted. The protein localises to the virion membrane. The protein resides in the host endoplasmic reticulum membrane. It carries out the reaction Selective hydrolysis of -Xaa-Xaa-|-Yaa- bonds in which each of the Xaa can be either Arg or Lys and Yaa can be either Ser or Ala.. The enzyme catalyses RNA(n) + a ribonucleoside 5'-triphosphate = RNA(n+1) + diphosphate. The catalysed reaction is a ribonucleoside 5'-triphosphate + H2O = a ribonucleoside 5'-diphosphate + phosphate + H(+). It catalyses the reaction ATP + H2O = ADP + phosphate + H(+). It carries out the reaction a 5'-end (5'-triphosphoguanosine)-ribonucleoside in mRNA + S-adenosyl-L-methionine = a 5'-end (N(7)-methyl 5'-triphosphoguanosine)-ribonucleoside in mRNA + S-adenosyl-L-homocysteine. The enzyme catalyses a 5'-end (N(7)-methyl 5'-triphosphoguanosine)-ribonucleoside in mRNA + S-adenosyl-L-methionine = a 5'-end (N(7)-methyl 5'-triphosphoguanosine)-(2'-O-methyl-ribonucleoside) in mRNA + S-adenosyl-L-homocysteine + H(+). Functionally, plays a role in virus budding by binding to the cell membrane and gathering the viral RNA into a nucleocapsid that forms the core of a mature virus particle. During virus entry, may induce genome penetration into the host cytoplasm after hemifusion induced by the surface proteins. Can migrate to the cell nucleus where it modulates host functions. Overcomes the anti-viral effects of host EXOC1 by sequestering and degrading the latter through the proteasome degradation pathway. In terms of biological role, inhibits RNA silencing by interfering with host Dicer. Prevents premature fusion activity of envelope proteins in trans-Golgi by binding to envelope protein E at pH6.0. After virion release in extracellular space, gets dissociated from E dimers. Its function is as follows. Acts as a chaperone for envelope protein E during intracellular virion assembly by masking and inactivating envelope protein E fusion peptide. prM is the only viral peptide matured by host furin in the trans-Golgi network probably to avoid catastrophic activation of the viral fusion activity in acidic Golgi compartment prior to virion release. prM-E cleavage is inefficient, and many virions are only partially matured. These uncleaved prM would play a role in immune evasion. Functionally, may play a role in virus budding. Exerts cytotoxic effects by activating a mitochondrial apoptotic pathway through M ectodomain. May display a viroporin activity. In terms of biological role, binds to host cell surface receptor and mediates fusion between viral and cellular membranes. Envelope protein is synthesized in the endoplasmic reticulum in the form of heterodimer with protein prM. They play a role in virion budding in the ER, and the newly formed immature particle is covered with 60 spikes composed of heterodimer between precursor prM and envelope protein E. The virion is transported to the Golgi apparatus where the low pH causes dissociation of PrM-E heterodimers and formation of E homodimers. prM-E cleavage is inefficient, and many virions are only partially matured. These uncleaved prM would play a role in immune evasion. Involved in immune evasion, pathogenesis and viral replication. Once cleaved off the polyprotein, is targeted to three destinations: the viral replication cycle, the plasma membrane and the extracellular compartment. Essential for viral replication. Required for formation of the replication complex and recruitment of other non-structural proteins to the ER-derived membrane structures. Excreted as a hexameric lipoparticle that plays a role against host immune response. Antagonizing the complement function. Binds to the host macrophages and dendritic cells. Inhibits signal transduction originating from Toll-like receptor 3 (TLR3). Its function is as follows. Component of the viral RNA replication complex that functions in virion assembly and antagonizes the host alpha/beta interferon antiviral response. Inhibits STAT2 translocation in the nucleus after IFN-alpha treatment. Functionally, required cofactor for the serine protease function of NS3. May have membrane-destabilizing activity and form viroporins. Inhibits STAT2 translocation in the nucleus after IFN-alpha treatment. In terms of biological role, displays three enzymatic activities: serine protease, NTPase and RNA helicase. NS3 serine protease, in association with NS2B, performs its autocleavage and cleaves the polyprotein at dibasic sites in the cytoplasm: C-prM, NS2A-NS2B, NS2B-NS3, NS3-NS4A, NS4A-2K and NS4B-NS5. NS3 RNA helicase binds RNA and unwinds dsRNA in the 3' to 5' direction. NS3 supports the separation of RNA daughter and template strands during viral replication. The helicase part is involved in the inhibition of phosphorylation of host STAT1, and thereby inhibition of host type-I IFN signaling. In addition, NS3 assists the initiation of replication by unwinding the RNA secondary structure in the 3' non-translated region (NTR). Inhibits STAT2 translocation in the nucleus after IFN-alpha treatment. Regulates the ATPase activity of the NS3 helicase activity. NS4A allows NS3 helicase to conserve energy during unwinding. Induces host ER membrane rearrangements to provide a compartment where viral replication can take part. Inhibits STAT2 translocation in the nucleus after IFN-alpha treatment. Its function is as follows. Functions as a signal peptide for NS4B and is required for the interferon antagonism activity of the latter. Functionally, induces the formation of ER-derived membrane vesicles where the viral replication takes place. Inhibits interferon (IFN)-induced host STAT1 phosphorylation and nuclear translocation, thereby preventing the establishment of cellular antiviral state by blocking the IFN-alpha/beta pathway. Inhibits STAT2 translocation in the nucleus after IFN-alpha treatment. In terms of biological role, replicates the viral (+) and (-) genome, and performs the capping of genomes in the cytoplasm. NS5 methylates viral RNA cap at guanine N-7 and ribose 2'-O positions. Besides its role in genome replication, also prevents the establishment of cellular antiviral state by blocking the interferon-alpha/beta (IFN-alpha/beta) signaling pathway. Inhibits host JAK1 and TYK2 phosphorylation, thereby preventing activation of JAK-STAT signaling pathway. May transcriptionally regulate host genes involved in antiviral response when localized in the nucleus. The protein is Genome polyprotein of Ciconiiformes (storks and others).